The chain runs to 356 residues: tRNA N6-adenosine threonylcarbamoyltransferase (356 aa).

Fe cation-binding residues include His115 and His119. Substrate contacts are provided by residues 138–142 (LVSGG), Asp171, Gly184, and Asn283. A Fe cation-binding site is contributed by Asp311.

Belongs to the KAE1 / TsaD family. It depends on Fe(2+) as a cofactor.

Its subcellular location is the cytoplasm. The catalysed reaction is L-threonylcarbamoyladenylate + adenosine(37) in tRNA = N(6)-L-threonylcarbamoyladenosine(37) in tRNA + AMP + H(+). In terms of biological role, required for the formation of a threonylcarbamoyl group on adenosine at position 37 (t(6)A37) in tRNAs that read codons beginning with adenine. Is involved in the transfer of the threonylcarbamoyl moiety of threonylcarbamoyl-AMP (TC-AMP) to the N6 group of A37, together with TsaE and TsaB. TsaD likely plays a direct catalytic role in this reaction. The protein is tRNA N6-adenosine threonylcarbamoyltransferase of Prochlorococcus marinus (strain AS9601).